We begin with the raw amino-acid sequence, 131 residues long: Ribosome-binding factor A (131 aa).

The protein belongs to the RbfA family. Monomer. Binds 30S ribosomal subunits, but not 50S ribosomal subunits or 70S ribosomes.

It is found in the cytoplasm. One of several proteins that assist in the late maturation steps of the functional core of the 30S ribosomal subunit. Associates with free 30S ribosomal subunits (but not with 30S subunits that are part of 70S ribosomes or polysomes). Required for efficient processing of 16S rRNA. May interact with the 5'-terminal helix region of 16S rRNA. This Pseudomonas fluorescens (strain SBW25) protein is Ribosome-binding factor A.